The sequence spans 287 residues: 4-hydroxybenzoate octaprenyltransferase (287 aa).

A run of 9 helical transmembrane segments spans residues 21 to 41 (VGIFLLLWPTLWAVWIAAKGA), 44 to 64 (FKIAVIFIAGSVVMRAAGCIV), 91 to 111 (VTEAMLLFAVLSLIAFTLVLL), 112 to 132 (LNRLTVELAVIGILLALVYPF), 139 to 159 (LPQLWLGVAFSWSIPMAFAAT), 160 to 180 (VGHVPAVAWLLFFAAVLWPIV), 211 to 231 (LMIGLLQGSVLLTFGLLGWYL), 235 to 255 (YWFYLGLLVALGLMCYQQFLI), and 263 to 283 (CFAAFRNNNWVGFFIFLGILL).

The protein belongs to the UbiA prenyltransferase family. Requires Mg(2+) as cofactor.

The protein localises to the cell inner membrane. It catalyses the reaction all-trans-octaprenyl diphosphate + 4-hydroxybenzoate = 4-hydroxy-3-(all-trans-octaprenyl)benzoate + diphosphate. The protein operates within cofactor biosynthesis; ubiquinone biosynthesis. Catalyzes the prenylation of para-hydroxybenzoate (PHB) with an all-trans polyprenyl group. Mediates the second step in the final reaction sequence of ubiquinone-8 (UQ-8) biosynthesis, which is the condensation of the polyisoprenoid side chain with PHB, generating the first membrane-bound Q intermediate 3-octaprenyl-4-hydroxybenzoate. The protein is 4-hydroxybenzoate octaprenyltransferase of Coxiella burnetii (strain CbuG_Q212) (Coxiella burnetii (strain Q212)).